Here is a 343-residue protein sequence, read N- to C-terminus: N-acetyl-gamma-glutamyl-phosphate reductase (343 aa).

C150 is a catalytic residue.

Belongs to the NAGSA dehydrogenase family. Type 1 subfamily.

The protein localises to the cytoplasm. It carries out the reaction N-acetyl-L-glutamate 5-semialdehyde + phosphate + NADP(+) = N-acetyl-L-glutamyl 5-phosphate + NADPH + H(+). Its pathway is amino-acid biosynthesis; L-arginine biosynthesis; N(2)-acetyl-L-ornithine from L-glutamate: step 3/4. Its function is as follows. Catalyzes the NADPH-dependent reduction of N-acetyl-5-glutamyl phosphate to yield N-acetyl-L-glutamate 5-semialdehyde. This Nitrosococcus oceani (strain ATCC 19707 / BCRC 17464 / JCM 30415 / NCIMB 11848 / C-107) protein is N-acetyl-gamma-glutamyl-phosphate reductase.